We begin with the raw amino-acid sequence, 550 residues long: Methionine--tRNA ligase (550 aa).

The short motif at 13 to 23 (PYANGPLHFGH) is the 'HIGH' region element. Cys145, Cys148, Cys158, and Cys161 together coordinate Zn(2+). A 'KMSKS' region motif is present at residues 331-335 (QFSKS). Lys334 contacts ATP.

This sequence belongs to the class-I aminoacyl-tRNA synthetase family. MetG type 1 subfamily. As to quaternary structure, monomer. The cofactor is Zn(2+).

Its subcellular location is the cytoplasm. The catalysed reaction is tRNA(Met) + L-methionine + ATP = L-methionyl-tRNA(Met) + AMP + diphosphate. In terms of biological role, is required not only for elongation of protein synthesis but also for the initiation of all mRNA translation through initiator tRNA(fMet) aminoacylation. This chain is Methionine--tRNA ligase, found in Chlamydia trachomatis serovar L2b (strain UCH-1/proctitis).